Here is a 503-residue protein sequence, read N- to C-terminus: WD repeat-containing protein 55 homolog (503 aa).

Residues methionine 1–leucine 131 form a disordered region. 2 stretches are compositionally biased toward acidic residues: residues aspartate 12–methionine 23 and valine 37–alanine 56. Residues proline 59 to aspartate 76 are compositionally biased toward polar residues. A compositionally biased stretch (acidic residues) spans asparagine 78–glutamate 96. WD repeat units follow at residues lysine 157–leucine 196, valine 201–glutamate 242, alanine 244–glutamate 282, glutamate 285–glutamine 324, proline 327–aspartate 366, and glutamine 411–aspartate 450. Positions threonine 483–alanine 503 are disordered.

The protein belongs to the WD repeat WDR55 family.

This Drosophila pseudoobscura pseudoobscura (Fruit fly) protein is WD repeat-containing protein 55 homolog.